A 568-amino-acid chain; its full sequence is Potassium-transporting ATPase potassium-binding subunit (568 aa).

Helical transmembrane passes span 7 to 27 (ITIG…GGFL), 65 to 85 (HYAL…YAIL), 136 to 156 (GLTV…AAII), 179 to 199 (LYVL…EGIP), 254 to 274 (LTNF…TNVF), 285 to 305 (WAVF…VYWA), 332 to 352 (FGVA…CGAV), 354 to 374 (AMHE…MMLG), 377 to 397 (IIGG…IAVF), 423 to 443 (MLAV…AVVV), 487 to 507 (ITLG…ALAI), and 530 to 550 (LFIG…FLPA).

Belongs to the KdpA family. In terms of assembly, the system is composed of three essential subunits: KdpA, KdpB and KdpC.

It is found in the cell inner membrane. Part of the high-affinity ATP-driven potassium transport (or Kdp) system, which catalyzes the hydrolysis of ATP coupled with the electrogenic transport of potassium into the cytoplasm. This subunit binds the periplasmic potassium ions and delivers the ions to the membrane domain of KdpB through an intramembrane tunnel. The chain is Potassium-transporting ATPase potassium-binding subunit from Granulibacter bethesdensis (strain ATCC BAA-1260 / CGDNIH1).